A 37-amino-acid polypeptide reads, in one-letter code: Cytochrome b6-f complex subunit 7 (37 aa).

A helical membrane pass occupies residues 11-29 (AILSIVLVLVGLAWGFLLL).

The protein belongs to the PetM family. As to quaternary structure, the 4 large subunits of the cytochrome b6-f complex are cytochrome b6, subunit IV (17 kDa polypeptide, PetD), cytochrome f and the Rieske protein, while the 4 small subunits are PetG, PetL, PetM and PetN. The complex functions as a dimer.

Its subcellular location is the cellular thylakoid membrane. In terms of biological role, component of the cytochrome b6-f complex, which mediates electron transfer between photosystem II (PSII) and photosystem I (PSI), cyclic electron flow around PSI, and state transitions. This chain is Cytochrome b6-f complex subunit 7, found in Gloeothece citriformis (strain PCC 7424) (Cyanothece sp. (strain PCC 7424)).